The following is a 700-amino-acid chain: Non-hemolytic phospholipase C (700 aa).

A signal peptide (tat-type signal) is located at residues 1–34 (MTNQNRRDFLRLAAGTAGAAALQLFPPVIREALA).

Belongs to the bacterial phospholipase C family. In terms of processing, predicted to be exported by the Tat system. The position of the signal peptide cleavage has not been experimentally proven.

It carries out the reaction a 1,2-diacyl-sn-glycero-3-phosphocholine + H2O = phosphocholine + a 1,2-diacyl-sn-glycerol + H(+). Functionally, hydrolyzes phosphatidylserine as well as phosphatidylcholine. This is Non-hemolytic phospholipase C (plcN) from Burkholderia pseudomallei (strain K96243).